A 274-amino-acid polypeptide reads, in one-letter code: MDRYCVFGNPIGHSKSPLIHRLFAEQTGQALAYEAQLAPLDDFAGFARRFFEQGKGANVTVPFKEEAYRLVDELSERATRAGAVNTLVRLDGGRLRGDNTDGAGLLRDLTVNAGVQLRDRRVLLLGAGGAVRGVLAPFLGERPAQLLVANRTAEKAVALAGEFADLGAVRGCGFADVEGPFDLIVNGTSASLAGDVPPLAESVIERGRTVCYDMMYAKEATAFNRWAAERGAARTLDGLGMLVEQAAEAFFLWRGVRPASAPVLETLRRQLATG.

Shikimate-binding positions include 14 to 16 (SKS) and Thr-60. Catalysis depends on Lys-64, which acts as the Proton acceptor. Residue Glu-76 participates in NADP(+) binding. Shikimate-binding residues include Asn-85 and Asp-101. Residues 126-130 (GAGGA), 150-155 (NRTAEK), and Met-214 each bind NADP(+). Shikimate is bound at residue Tyr-216. Residue Gly-238 participates in NADP(+) binding.

Belongs to the shikimate dehydrogenase family. As to quaternary structure, homodimer.

The enzyme catalyses shikimate + NADP(+) = 3-dehydroshikimate + NADPH + H(+). It participates in metabolic intermediate biosynthesis; chorismate biosynthesis; chorismate from D-erythrose 4-phosphate and phosphoenolpyruvate: step 4/7. Involved in the biosynthesis of the chorismate, which leads to the biosynthesis of aromatic amino acids. Catalyzes the reversible NADPH linked reduction of 3-dehydroshikimate (DHSA) to yield shikimate (SA). The polypeptide is Shikimate dehydrogenase (NADP(+)) (Pseudomonas paraeruginosa (strain DSM 24068 / PA7) (Pseudomonas aeruginosa (strain PA7))).